A 494-amino-acid chain; its full sequence is UPF0164 protein TP_0859/TP_0860 (494 aa).

The first 44 residues, 1–44 (MVRRPCVSAAPVRVGGRLVFGFARVGSRGLCLGALLLSPRIVLA), serve as a signal peptide directing secretion.

The protein belongs to the UPF0164 family.

The protein is UPF0164 protein TP_0859/TP_0860 of Treponema pallidum (strain Nichols).